We begin with the raw amino-acid sequence, 471 residues long: Tryptophanase (471 aa).

Position 270 is an N6-(pyridoxal phosphate)lysine (Lys-270).

Belongs to the beta-eliminating lyase family. In terms of assembly, homotetramer. Pyridoxal 5'-phosphate is required as a cofactor.

It catalyses the reaction L-tryptophan + H2O = indole + pyruvate + NH4(+). It participates in amino-acid degradation; L-tryptophan degradation via pyruvate pathway; indole and pyruvate from L-tryptophan: step 1/1. This Histophilus somni (strain 129Pt) (Haemophilus somnus) protein is Tryptophanase.